The chain runs to 150 residues: Depactin (150 aa).

The ADF-H domain maps to 3 to 148 (SGTALDENVK…SEEAIGDKIK (146 aa)).

This sequence belongs to the actin-binding proteins ADF family.

Functionally, depactin interacts with actin at some of its 12 N-terminal residues and 20 C-terminal residues. Binds to actin monomers from filaments and in solution. In Asterias amurensis (Northern Pacific seastar), this protein is Depactin.